We begin with the raw amino-acid sequence, 1124 residues long: PAN2-PAN3 deadenylation complex catalytic subunit PAN2 (1124 aa).

WD repeat units lie at residues 19–58 (IDNS…IPMP), 118–157 (PGFN…TTSF), 158–195 (NHTG…TVKS), and 309–348 (SSNT…SKNF). The interval 351–484 (FPSYLEQPDF…EYKLSNKFEV (134 aa)) is linker. One can recognise a USP domain in the interval 484-861 (VPNCYSNLKI…KPIIVMYQLA (378 aa)). An Exonuclease domain is found at 917-1091 (IAIDAEFVAL…EDANTALLLY (175 aa)). Residues D920, E922, D1030, and D1083 each coordinate a divalent metal cation.

Belongs to the peptidase C19 family. PAN2 subfamily. As to quaternary structure, forms a heterotrimer with an asymmetric homodimer of the regulatory subunit PAN3 to form the poly(A)-nuclease (PAN) deadenylation complex. Requires a divalent metal cation as cofactor.

Its subcellular location is the cytoplasm. It catalyses the reaction Exonucleolytic cleavage of poly(A) to 5'-AMP.. With respect to regulation, positively regulated by the regulatory subunit PAN3. Its function is as follows. Catalytic subunit of the poly(A)-nuclease (PAN) deadenylation complex, one of two cytoplasmic mRNA deadenylases involved in mRNA turnover. PAN specifically shortens poly(A) tails of RNA and the activity is stimulated by poly(A)-binding protein PAB1. PAN deadenylation is followed by rapid degradation of the shortened mRNA tails by the CCR4-NOT complex. Deadenylated mRNAs are then degraded by two alternative mechanisms, namely exosome-mediated 3'-5' exonucleolytic degradation, or deadenylation-dependent mRNA decaping and subsequent 5'-3' exonucleolytic degradation by XRN1. May also be involved in post-transcriptional maturation of mRNA poly(A) tails. This is PAN2-PAN3 deadenylation complex catalytic subunit PAN2 from Debaryomyces hansenii (strain ATCC 36239 / CBS 767 / BCRC 21394 / JCM 1990 / NBRC 0083 / IGC 2968) (Yeast).